Consider the following 471-residue polypeptide: GTPase Der (471 aa).

2 EngA-type G domains span residues 3–166 (PTLA…EPEA) and 177–350 (IKLA…SSAT). Residues 9-16 (GRPNVGKS), 56-60 (DTGGI), 118-121 (NKVD), 183-190 (GRPNVGKS), 230-234 (DTAGV), and 295-298 (NKWD) each bind GTP. A KH-like domain is found at 351–435 (EKLNTNFLTK…PIRFEFKSSE (85 aa)). Residues 432-471 (KSSENPFAGRKNAMSKKPEHPSRRANSGGKSINRRPRPKS) are disordered.

The protein belongs to the TRAFAC class TrmE-Era-EngA-EngB-Septin-like GTPase superfamily. EngA (Der) GTPase family. Associates with the 50S ribosomal subunit.

GTPase that plays an essential role in the late steps of ribosome biogenesis. The sequence is that of GTPase Der from Saccharophagus degradans (strain 2-40 / ATCC 43961 / DSM 17024).